The chain runs to 445 residues: Xylose isomerase (445 aa).

Active-site residues include histidine 107 and aspartate 110. Mg(2+) is bound by residues glutamate 238, glutamate 274, histidine 277, aspartate 302, aspartate 313, aspartate 315, and aspartate 345.

Belongs to the xylose isomerase family. In terms of assembly, homotetramer. Mg(2+) is required as a cofactor.

It is found in the cytoplasm. The enzyme catalyses alpha-D-xylose = alpha-D-xylulofuranose. The chain is Xylose isomerase from Bacillus pumilus (strain SAFR-032).